The following is a 632-amino-acid chain: Protein NSP-INTERACTING KINASE 3 (632 aa).

Positions 1–25 (MEGVRFVVWRLGFLVFVWFFDISSA) are cleaved as a signal peptide. Over 26-238 (TLSPTGVNYE…GTRTNGHHVA (213 aa)) the chain is Extracellular. Asn96 carries N-linked (GlcNAc...) asparagine glycosylation. 4 LRR repeats span residues 97 to 121 (LTYL…IGRL), 122 to 145 (EKLQ…LGEL), 147 to 168 (NLNY…SLSK), and 169 to 193 (IEGL…SART). N-linked (GlcNAc...) asparagine glycosylation is found at Asn131, Asn155, Asn181, and Asn210. A helical membrane pass occupies residues 239 to 259 (LAFAASFSAAFFVFFTSGMFL). The Cytoplasmic segment spans residues 260 to 632 (WWRYRRNKQI…VEAIELSGPR (373 aa)). Thr298 carries the phosphothreonine modification. The region spanning 301–584 (FNSKNILGRG…EGDGLAERWE (284 aa)) is the Protein kinase domain. 307–315 (LGRGGYGIV) lines the ATP pocket. Thr324 carries the phosphothreonine modification. Lys329 provides a ligand contact to ATP. Phosphoserine occurs at positions 382 and 385. An interaction with geminivirus NSP protein region spans residues 415-495 (YLHEQCDPKI…DVFGFGILLL (81 aa)). Residue Asp428 is the Proton acceptor of the active site. Phosphothreonine occurs at positions 461, 462, and 467. Tyr475 is subject to Phosphotyrosine. A Phosphoserine modification is found at Ser477. Thr478 bears the Phosphothreonine mark. Phosphoserine is present on Ser482. Thr557 carries the phosphothreonine modification.

Belongs to the protein kinase superfamily. Ser/Thr protein kinase family. As to quaternary structure, oligomer. Interacts with geminivirus nuclear shuttle protein (NSP). Post-translationally, autophosphorylated. In terms of tissue distribution, expressed in seedlings, leaves and flowers.

It is found in the cell membrane. The catalysed reaction is L-seryl-[protein] + ATP = O-phospho-L-seryl-[protein] + ADP + H(+). It catalyses the reaction L-threonyl-[protein] + ATP = O-phospho-L-threonyl-[protein] + ADP + H(+). Its activity is regulated as follows. Inhibited by the viral nuclear shuttle protein (NSP) that binds to the region required for oligomerization. In terms of biological role, involved in defense response to geminivirus infection. The chain is Protein NSP-INTERACTING KINASE 3 (NIK3) from Arabidopsis thaliana (Mouse-ear cress).